Here is a 150-residue protein sequence, read N- to C-terminus: MNLSNLQPAEGSTHNQNKRVGRGEGSGKGGTAARGHKGAKSRSGYSKKIGFEGGQMPLQRRVPKFGFKNINRKEYEGVNLDTLQLLVDNGVITDSVSMTDFVANRLASKNEIVKILGRGELKAKLKVTAHKFTATAKAAIEAAGGEAVTI.

The segment covering 1 to 15 (MNLSNLQPAEGSTHN) has biased composition (polar residues). The interval 1–53 (MNLSNLQPAEGSTHNQNKRVGRGEGSGKGGTAARGHKGAKSRSGYSKKIGFEG) is disordered. The segment covering 23 to 32 (GEGSGKGGTA) has biased composition (gly residues).

It belongs to the universal ribosomal protein uL15 family. In terms of assembly, part of the 50S ribosomal subunit.

Its function is as follows. Binds to the 23S rRNA. In Flavobacterium johnsoniae (strain ATCC 17061 / DSM 2064 / JCM 8514 / BCRC 14874 / CCUG 350202 / NBRC 14942 / NCIMB 11054 / UW101) (Cytophaga johnsonae), this protein is Large ribosomal subunit protein uL15.